The primary structure comprises 327 residues: MLNKFTDFIKIYCKSGDGGSGIIHFRKEKFINRGGPDGGDGGKGGNILIRGNNKLFTISHLKYKKHIIAENGKNGGRNRITGSNGKDSIIEVPIGTIVKDIYNNIIIEILNNNEEKILLFGGKGGKGNCHFKNSLCKTPFYSEKGESGKEFIFVLELKILADVGLIGLPNSGKSTLISMITSSKPKIDNYPFTTLNTNIGVLNYKNFKKIVIADIPGIIKGASKGKGLGFEFLKHIQRNKIIVFILSAEVIYYKKYYNIIINELNFFDKNILKKKRLLVISKSDLLDQELKYEIIKELPKFEKYIFISSFSKEGLYELIYYICNILS.

Residues 3–160 enclose the Obg domain; that stretch reads NKFTDFIKIY…FIFVLELKIL (158 aa). The OBG-type G domain maps to 161–327; the sequence is ADVGLIGLPN…LIYYICNILS (167 aa). GTP-binding positions include 167 to 174, 192 to 196, 214 to 217, 281 to 284, and 308 to 310; these read GLPNSGKS, FTTLN, DIPG, SKSD, and SSF. The Mg(2+) site is built by Ser-174 and Thr-194.

This sequence belongs to the TRAFAC class OBG-HflX-like GTPase superfamily. OBG GTPase family. As to quaternary structure, monomer. Mg(2+) is required as a cofactor.

It localises to the cytoplasm. In terms of biological role, an essential GTPase which binds GTP, GDP and possibly (p)ppGpp with moderate affinity, with high nucleotide exchange rates and a fairly low GTP hydrolysis rate. Plays a role in control of the cell cycle, stress response, ribosome biogenesis and in those bacteria that undergo differentiation, in morphogenesis control. The polypeptide is GTPase Obg (Karelsulcia muelleri (strain GWSS) (Sulcia muelleri)).